We begin with the raw amino-acid sequence, 130 residues long: DNA-directed RNA polymerase subunit omega (130 aa).

2 disordered regions span residues 79–98 and 109–130; these read EPEPDTVPLIGSAGASVDAD and EEELLKGLEGLAPPEEQPEEDE.

Belongs to the RNA polymerase subunit omega family. In terms of assembly, the RNAP catalytic core consists of 2 alpha, 1 beta, 1 beta' and 1 omega subunit. When a sigma factor is associated with the core the holoenzyme is formed, which can initiate transcription.

The catalysed reaction is RNA(n) + a ribonucleoside 5'-triphosphate = RNA(n+1) + diphosphate. Promotes RNA polymerase assembly. Latches the N- and C-terminal regions of the beta' subunit thereby facilitating its interaction with the beta and alpha subunits. This chain is DNA-directed RNA polymerase subunit omega (rpoZ), found in Bradyrhizobium diazoefficiens (strain JCM 10833 / BCRC 13528 / IAM 13628 / NBRC 14792 / USDA 110).